The primary structure comprises 93 residues: Phosphoribosyl-ATP pyrophosphatase (93 aa).

The protein belongs to the PRA-PH family.

It is found in the cytoplasm. It catalyses the reaction 1-(5-phospho-beta-D-ribosyl)-ATP + H2O = 1-(5-phospho-beta-D-ribosyl)-5'-AMP + diphosphate + H(+). The protein operates within amino-acid biosynthesis; L-histidine biosynthesis; L-histidine from 5-phospho-alpha-D-ribose 1-diphosphate: step 2/9. The sequence is that of Phosphoribosyl-ATP pyrophosphatase from Rhodococcus erythropolis (strain PR4 / NBRC 100887).